A 674-amino-acid chain; its full sequence is Primary amine oxidase (674 aa).

The signal sequence occupies residues 1 to 25 (MASTTTMRLALFSVLTLLSFHAVVS). A glycan (N-linked (GlcNAc...) asparagine) is linked at Asn156. The cysteines at positions 162 and 183 are disulfide-linked. Polar residues predominate over residues 226–236 (ENTEYQVSKQS). Residues 226 to 251 (ENTEYQVSKQSPPFGPKQHSLTSHQP) are disordered. Position 323–334 (323–334 (FFDSGEFGFGLS)) interacts with substrate. The Proton acceptor role is filled by Asp325. A disulfide bond links Cys344 and Cys370. Residue Asn389 is glycosylated (N-linked (GlcNAc...) asparagine). 409 to 414 (VGNYDN) is a binding site for substrate. The active-site Schiff-base intermediate with substrate; via topaquinone is Tyr412. 2',4',5'-topaquinone is present on Tyr412. His467 and His469 together coordinate Cu cation. Mn(2+) is bound by residues Asp476, Phe477, Asp478, Asp617, and Ile618. Residue His628 coordinates Cu cation.

Belongs to the copper/topaquinone oxidase family. Homodimer. The cofactor is Cu cation. Mn(2+) serves as cofactor. It depends on L-topaquinone as a cofactor. In terms of processing, topaquinone (TPQ) is generated by copper-dependent autoxidation of a specific tyrosyl residue.

The enzyme catalyses a primary methyl amine + O2 + H2O = an aldehyde + H2O2 + NH4(+). This is Primary amine oxidase from Pisum sativum (Garden pea).